Reading from the N-terminus, the 187-residue chain is Large ribosomal subunit protein uL5 (187 aa).

It belongs to the universal ribosomal protein uL5 family. Part of the 50S ribosomal subunit; part of the 5S rRNA/L5/L18/L25 subcomplex. Contacts the 5S rRNA and the P site tRNA. Forms a bridge to the 30S subunit in the 70S ribosome.

Its function is as follows. This is one of the proteins that bind and probably mediate the attachment of the 5S RNA into the large ribosomal subunit, where it forms part of the central protuberance. In the 70S ribosome it contacts protein S13 of the 30S subunit (bridge B1b), connecting the 2 subunits; this bridge is implicated in subunit movement. Contacts the P site tRNA; the 5S rRNA and some of its associated proteins might help stabilize positioning of ribosome-bound tRNAs. This Saccharopolyspora erythraea (strain ATCC 11635 / DSM 40517 / JCM 4748 / NBRC 13426 / NCIMB 8594 / NRRL 2338) protein is Large ribosomal subunit protein uL5.